We begin with the raw amino-acid sequence, 591 residues long: Probable lysosomal cobalamin transporter (591 aa).

A run of 5 helical transmembrane segments spans residues 8-28, 39-59, 95-115, 144-164, and 198-218; these read LIWV…STFV, AAVT…VLLI, IVYY…IPFT, WTLG…FVPF, and FLIT…MALL. Positions 238–266 are disordered; it reads TASQLETNRERQRQLEGRNEGREGGLDSR. A compositionally biased stretch (basic and acidic residues) spans 244–266; it reads TNRERQRQLEGRNEGREGGLDSR. The next 4 helical transmembrane spans lie at 315 to 335, 378 to 398, 422 to 442, and 509 to 529; these read LIGG…MLIT, VLFL…IATA, MATV…AMVV, and FFGI…LIVF.

The protein belongs to the LIMR family. LMBRD1 subfamily.

Its subcellular location is the lysosome membrane. Probable lysosomal cobalamin transporter. Required to export cobalamin from lysosomes allowing its conversion to cofactors. In Pyrenophora tritici-repentis (strain Pt-1C-BFP) (Wheat tan spot fungus), this protein is Probable lysosomal cobalamin transporter.